Consider the following 1216-residue polypeptide: Apical endosomal glycoprotein (1216 aa).

Residues 1-22 form the signal peptide; it reads MPLSSHLLPALVLFLAGSSGWA. Topologically, residues 23–1151 are extracellular; it reads WVPNHCRSPG…SPGNTAAPGS (1129 aa). The LDL-receptor class A 1; truncated domain maps to 26-53; the sequence is NHCRSPGQAVCNFVCDCRDCSDEAQCGY. Residues 64–222 enclose the MAM 1 domain; that stretch reads FACDFEQDPC…DDLEFWDCGL (159 aa). Asparagine 203 carries N-linked (GlcNAc...) asparagine glycosylation. The LDL-receptor class A 2 domain occupies 228-266; sequence NCPPGHHHCQNKVCVEPQQLCDGEDNCGDLSDENPLTCG. Intrachain disulfides connect cysteine 229–cysteine 241, cysteine 236–cysteine 254, and cysteine 248–cysteine 265. In terms of domain architecture, MAM 2 spans 269-425; that stretch reads IATDFETGLG…DLILSDHCRP (157 aa). Residues 280–307 are disordered; that stretch reads WNRSEGWSRNHRAGGPERPSWPRRDHSR. 2 N-linked (GlcNAc...) asparagine glycosylation sites follow: asparagine 281 and asparagine 339. The interval 429–455 is disordered; it reads VSTLQPLPPGPRAPAPQPLPPSSRLQD. Positions 434–449 are enriched in pro residues; it reads PLPPGPRAPAPQPLPP. In terms of domain architecture, LDL-receptor class A 3 spans 456–491; it reads SCKQGHLACGDLCVPPEQLCDFEEQCAGGEDEQACG. Intrachain disulfides connect cysteine 457–cysteine 468, cysteine 464–cysteine 481, and cysteine 475–cysteine 490. MAM domains lie at 491–644, 654–809, 811–969, and 971–1138; these read GTTD…DCSP, VSCN…PCWA, NYCS…PCPQ, and GSCD…HCQQ. N-linked (GlcNAc...) asparagine glycosylation is found at asparagine 583 and asparagine 636. The N-linked (GlcNAc...) asparagine glycan is linked to asparagine 835. Residues 1152 to 1172 traverse the membrane as a helical segment; it reads VPAVVGSALLLLMLLVLLGLG. Residues 1173 to 1216 lie on the Cytoplasmic side of the membrane; that stretch reads GRRWLQKKGSCPFQSNTEATAPGFDNILFNADGVTLPASVTSDP.

The protein localises to the membrane. Functionally, probably involved in the sorting and selective transport of receptors and ligands across polarized epithelia. The chain is Apical endosomal glycoprotein from Homo sapiens (Human).